Consider the following 60-residue polypeptide: Large ribosomal subunit protein bL33 (60 aa).

The protein belongs to the bacterial ribosomal protein bL33 family.

This is Large ribosomal subunit protein bL33 from Chlorobium limicola (strain DSM 245 / NBRC 103803 / 6330).